The following is a 487-amino-acid chain: Lysophospholipid acyltransferase 5 (487 aa).

A2 is subject to N-acetylalanine. Transmembrane regions (helical) follow at residues 44-64 (LIFS…YLFY), 84-104 (FNFG…FLIL), 111-131 (VTAV…GYYY), and 180-200 (GVPS…FLVG). Residue N225 is glycosylated (N-linked (GlcNAc...) asparagine). Helical transmembrane passes span 236-256 (LGLV…DDYL) and 285-305 (VTCW…FNGF). Residues N308 and N331 are each glycosylated (N-linked (GlcNAc...) asparagine). Active-site residues include N338 and H374. The next 3 helical transmembrane spans lie at 364–384 (GLSL…LICF), 422–442 (LVQQ…FCLF), and 453–473 (SIYF…PYIH). Positions 484–487 (KKRE) match the Di-lysine motif motif.

This sequence belongs to the membrane-bound acyltransferase family. In terms of tissue distribution, detected ubiquitously, with high expression levels in small intestine, brown adipose tissue, liver, kidney and testis. Expressed in liver and both proximal and distal small intestine (at protein level). Expressed in peritoneal macrophages.

The protein localises to the endoplasmic reticulum membrane. The catalysed reaction is a 1-acyl-sn-glycero-3-phosphocholine + an acyl-CoA = a 1,2-diacyl-sn-glycero-3-phosphocholine + CoA. It catalyses the reaction a 1-acyl-sn-glycero-3-phosphoethanolamine + an acyl-CoA = a 1,2-diacyl-sn-glycero-3-phosphoethanolamine + CoA. It carries out the reaction a 1-acyl-sn-glycero-3-phospho-L-serine + an acyl-CoA = a 1,2-diacyl-sn-glycero-3-phospho-L-serine + CoA. The enzyme catalyses (9Z,12Z)-octadecadienoyl-CoA + a 1-acyl-sn-glycero-3-phosphocholine = 1-acyl-2-(9Z,12Z)-octadecadienoyl-sn-glycero-3-phosphocholine + CoA. The catalysed reaction is (5Z,8Z,11Z,14Z)-eicosatetraenoyl-CoA + a 1-acyl-sn-glycero-3-phosphocholine = 1-acyl-2-(5Z,8Z,11Z,14Z-eicosatetraenoyl)-sn-glycero-3-phosphocholine + CoA. It catalyses the reaction dodecanoyl-CoA + 1-hexadecanoyl-sn-glycero-3-phosphocholine = 1-hexadecanoyl-2-dodecanoyl-sn-glycero-3-phosphocholine + CoA. It carries out the reaction octadecanoyl-CoA + 1-hexadecanoyl-sn-glycero-3-phosphocholine = 1-hexadecanoyl-2-octadecanoyl-sn-glycero-3-phosphocholine + CoA. The enzyme catalyses 1-dodecanoyl-sn-glycero-3-phosphocholine + hexadecanoyl-CoA = 1-dodecanoyl-2-hexadecanoyl-sn-glycero-3-phosphocholine + CoA. The catalysed reaction is 1-tetradecanoyl-sn-glycero-3-phosphocholine + hexadecanoyl-CoA = 1-tetradecanoyl-2-hexadecanoyl-sn-glycero-3-phosphocholine + CoA. It catalyses the reaction 1-hexadecanoyl-sn-glycero-3-phosphocholine + hexadecanoyl-CoA = 1,2-dihexadecanoyl-sn-glycero-3-phosphocholine + CoA. It carries out the reaction 1-octadecanoyl-sn-glycero-3-phosphocholine + hexadecanoyl-CoA = 1-octadecanoyl-2-hexadecanoyl-sn-glycero-3-phosphocholine + CoA. The enzyme catalyses 1-(9Z-octadecenoyl)-sn-glycero-3-phosphocholine + hexadecanoyl-CoA = 1-(9Z-octadecenoyl)-2-hexadecanoyl-sn-glycero-3-phosphocholine + CoA. The catalysed reaction is (9Z)-hexadecenoyl-CoA + 1-hexadecanoyl-sn-glycero-3-phosphocholine = 1-hexadecanoyl-2-(9Z-hexadecenoyl)-sn-glycero-3-phosphocholine + CoA. It catalyses the reaction 1-hexadecanoyl-sn-glycero-3-phosphocholine + (9Z)-octadecenoyl-CoA = 1-hexadecanoyl-2-(9Z-octadecenoyl)-sn-glycero-3-phosphocholine + CoA. It carries out the reaction (9Z,12Z)-octadecadienoyl-CoA + 1-hexadecanoyl-sn-glycero-3-phosphocholine = 1-hexadecanoyl-2-(9Z,12Z-octadecadienoyl)-sn-glycero-3-phosphocholine + CoA. The enzyme catalyses 1-dodecanoyl-sn-glycero-3-phosphocholine + (5Z,8Z,11Z,14Z)-eicosatetraenoyl-CoA = 1-dodecanoyl-2-(5Z,8Z,11Z,14Z)-eicosatetraenoyl-sn-glycero-3-phosphocholine + CoA. The catalysed reaction is (5Z,8Z,11Z,14Z)-eicosatetraenoyl-CoA + 1-hexadecanoyl-sn-glycero-3-phosphocholine = 1-hexadecanoyl-2-(5Z,8Z,11Z,14Z-eicosatetraenoyl)-sn-glycero-3-phosphocholine + CoA. It catalyses the reaction 1-octadecanoyl-sn-glycero-3-phosphocholine + (5Z,8Z,11Z,14Z)-eicosatetraenoyl-CoA = 1-octadecanoyl-2-(5Z,8Z,11Z,14Z-eicosatetraenoyl)-sn-glycero-3-phosphocholine + CoA. It carries out the reaction 1-eicosanoyl-sn-glycero-3-phosphocholine + (5Z,8Z,11Z,14Z)-eicosatetraenoyl-CoA = 1-eicosanoyl-2-(5Z,8Z,11Z,14Z)-eicosatetraenoyl-sn-glycero-3-phosphocholine + CoA. The enzyme catalyses 1-(9Z-octadecenoyl)-sn-glycero-3-phosphocholine + (9Z)-octadecenoyl-CoA = 1,2-di-(9Z-octadecenoyl)-sn-glycero-3-phosphocholine + CoA. The catalysed reaction is 1-(9Z-octadecenoyl)-sn-glycero-3-phosphocholine + (9Z,12Z)-octadecadienoyl-CoA = 1-(9Z)-octadecenoyl-2-(9Z,12Z)-octadecadienoyl-sn-glycero-3-phosphocholine + CoA. It catalyses the reaction 1-(9Z-octadecenoyl)-sn-glycero-3-phosphocholine + (5Z,8Z,11Z,14Z)-eicosatetraenoyl-CoA = 1-(9Z)-octadecenoyl-2-(5Z,8Z,11Z,14Z)-icosatetraenoyl-sn-glycero-3-phosphocholine + CoA. It carries out the reaction a 1-acyl-sn-glycero-3-phosphoethanolamine + (9Z,12Z)-octadecadienoyl-CoA = 1-acyl-2-(9Z,12Z)-octadecadienoyl-sn-glycero-3-phosphoethanolamine + CoA. The enzyme catalyses 1-(9Z-octadecenoyl)-sn-glycero-3-phosphoethanolamine + (9Z,12Z)-octadecadienoyl-CoA = 1-(9Z)-octadecenoyl-2-(9Z,12Z)-octadecadienoyl-sn-glycero-3-phosphoethanolamine + CoA. The catalysed reaction is 1-(10Z-heptadecenoyl)-sn-glycero-3-phosphoethanolamine + (9Z,12Z)-octadecadienoyl-CoA = 1-(10Z-heptadecenoyl)-2-(9Z,12Z-octadecadienoyl)-sn-glycero-3-phosphoethanolamine + CoA. It catalyses the reaction a 1-acyl-sn-glycero-3-phosphoethanolamine + (5Z,8Z,11Z,14Z)-eicosatetraenoyl-CoA = 1-acyl-2-(5Z,8Z,11Z,14Z)-eicosatetraenoyl-sn-glycero-3-phosphoethanolamine + CoA. It carries out the reaction 1-hexadecanoyl-sn-glycero-3-phosphoethanolamine + (5Z,8Z,11Z,14Z)-eicosatetraenoyl-CoA = 1-hexadecanoyl-2-(5Z,8Z,11Z,14Z-eicosatetraenoyl)-sn-glycero-3-phosphoethanolamine + CoA. The enzyme catalyses 1-(9Z-octadecenoyl)-sn-glycero-3-phosphoethanolamine + (5Z,8Z,11Z,14Z)-eicosatetraenoyl-CoA = 1-(9Z)-octadecenoyl-2-(5Z,8Z,11Z,14Z)-eicosatetraenoyl-sn-glycero-3-phosphoethanolamine + CoA. The catalysed reaction is 1-(10Z-heptadecenoyl)-sn-glycero-3-phosphoethanolamine + (5Z,8Z,11Z,14Z)-eicosatetraenoyl-CoA = 1-(10Z-heptadecenoyl)-2-(5Z,8Z,11Z,14Z-eicosatetraenoyl)-sn-glycero-3-phosphoethanolamine + CoA. It catalyses the reaction a 1-O-(1Z-alkenyl)-sn-glycero-3-phosphoethanolamine + (5Z,8Z,11Z,14Z)-eicosatetraenoyl-CoA = 1-O-(1Z)-alkenyl-2-(5Z,8Z,11Z,14Z)-eicosatetraenoyl-sn-glycero-3-phosphoethanolamine + CoA. It carries out the reaction a 1-acyl-sn-glycero-3-phospho-L-serine + (9Z,12Z)-octadecadienoyl-CoA = 1-acyl-2-(9Z,12Z-octadecadienoyl)-sn-glycero-3-phospho-L-serine + CoA. The enzyme catalyses a 1-acyl-sn-glycero-3-phospho-L-serine + (5Z,8Z,11Z,14Z)-eicosatetraenoyl-CoA = 1-acyl-2-(5Z,8Z,11Z,14Z-eicosatetraenoyl)-sn-glycero-3-phospho-L-serine + CoA. The catalysed reaction is 1-hexadecanoyl-sn-glycero-3-phospho-L-serine + (9Z)-octadecenoyl-CoA = 1-hexadecanoyl-2-(9Z-octadecenoyl)-sn-glycero-3-phospho-L-serine + CoA. It catalyses the reaction 1-(9Z-octadecenoyl)-sn-glycero-3-phospho-L-serine + (9Z)-octadecenoyl-CoA = 1,2-di-(9Z)-octadecenoyl-sn-glycero-3-phospho-L-serine + CoA. It carries out the reaction 1-hexadecanoyl-sn-glycero-3-phospho-L-serine + (9Z,12Z)-octadecadienoyl-CoA = 1-hexadecanoyl-2-(9Z,12Z-octadecadienoyl)-sn-glycero-3-phospho-L-serine + CoA. The enzyme catalyses 1-(9Z-octadecenoyl)-sn-glycero-3-phospho-L-serine + (9Z,12Z)-octadecadienoyl-CoA = 1-(9Z-octadecenoyl)-2-(9Z,12Z-octadienoyl)-sn-glycero-3-phospho-L-serine + CoA. The catalysed reaction is 1-hexadecanoyl-sn-glycero-3-phospho-L-serine + (5Z,8Z,11Z,14Z)-eicosatetraenoyl-CoA = 1-hexadecanoyl-2-(5Z,8Z,11Z,14Z-eicosatetraenoyl)-sn-glycero-3-phospho-L-serine + CoA. It catalyses the reaction 1-(9Z-octadecenoyl)-sn-glycero-3-phospho-L-serine + (5Z,8Z,11Z,14Z)-eicosatetraenoyl-CoA = 1-(9Z-octadecenoyl)-2-(5Z,8Z,11Z,14Z-eicosatetraenoyl)-sn-glycero-3-phospho-L-serine + CoA. It participates in lipid metabolism; phospholipid metabolism. Its function is as follows. Lysophospholipid O-acyltransferase (LPLAT) that catalyzes the reacylation step of the phospholipid remodeling process also known as the Lands cycle. Catalyzes transfer of the fatty acyl chain from fatty acyl-CoA to 1-acyl lysophospholipid to form various classes of phospholipids. Converts 1-acyl lysophosphatidylcholine (LPC) into phosphatidylcholine (PC) (LPCAT activity), 1-acyl lysophosphatidylserine (LPS) into phosphatidylserine (PS) (LPSAT activity) and 1-acyl lysophosphatidylethanolamine (LPE) into phosphatidylethanolamine (PE) (LPEAT activity). Favors polyunsaturated fatty acyl-CoAs as acyl donors compared to saturated fatty acyl-CoAs. Has higher activity for LPC acyl acceptors compared to LPEs and LPSs. Can also transfer the fatty acyl chain from fatty acyl-CoA to 1-O-alkyl lysophospholipid or 1-O-alkenyl lysophospholipid with lower efficiency. Acts as a major LPC O-acyltransferase in liver and intestine. As a component of the liver X receptor/NR1H3 or NR1H2 signaling pathway, mainly catalyzes the incorporation of arachidonate into PCs of endoplasmic reticulum (ER) membranes, increasing membrane dynamics and enabling triacylglycerols transfer to nascent very low-density lipoprotein (VLDL) particles. Promotes processing of sterol regulatory protein SREBF1 in hepatocytes, likely by facilitating the translocation of SREBF1-SCAP complex from ER to the Golgi apparatus. Participates in mechanisms by which the liver X receptor/NR1H3 or NR1H2 signaling pathway counteracts lipid-induced ER stress response and inflammation. Down-regulates hepatic inflammation by limiting arachidonic acid availability for synthesis of inflammatory eicosanoids, such as prostaglandins. In enterocytes, acts as a component of a gut-brain feedback loop that coordinates dietary lipid absorption and food intake. Regulates the abundance of PCs containing linoleate and arachidonate in enterocyte membranes, enabling passive diffusion of fatty acids and cholesterol across the membrane for efficient chylomicron assembly. In the intestinal crypt, acts as a component of dietary-responsive phospholipid-cholesterol axis, regulating the biosynthesis of cholesterol and its mitogenic effects on intestinal stem cells. This is Lysophospholipid acyltransferase 5 (Lpcat3) from Mus musculus (Mouse).